Reading from the N-terminus, the 295-residue chain is Cyclin-G1 (295 aa).

Belongs to the cyclin family. Cyclin G subfamily.

It is found in the nucleus. Functionally, may play a role in growth regulation. Is associated with G2/M phase arrest in response to DNA damage. May be an intermediate by which p53 mediates its role as an inhibitor of cellular proliferation. This is Cyclin-G1 (CCNG1) from Pongo abelii (Sumatran orangutan).